A 433-amino-acid chain; its full sequence is Adenylosuccinate synthetase (433 aa).

Residues 11–17 (GDEGKGK) and 39–41 (GHT) contribute to the GTP site. The active-site Proton acceptor is Asp-12. Positions 12 and 39 each coordinate Mg(2+). IMP contacts are provided by residues 12–15 (DEGK), 37–40 (NAGH), Thr-134, Arg-148, Asn-230, Thr-245, and Arg-309. Residue His-40 is the Proton donor of the active site. 305 to 311 (VTTGRKR) provides a ligand contact to substrate. GTP-binding positions include Arg-311, 337 to 339 (KLD), and 419 to 421 (GTG).

This sequence belongs to the adenylosuccinate synthetase family. As to quaternary structure, homodimer. The cofactor is Mg(2+).

The protein resides in the cytoplasm. The catalysed reaction is IMP + L-aspartate + GTP = N(6)-(1,2-dicarboxyethyl)-AMP + GDP + phosphate + 2 H(+). Its pathway is purine metabolism; AMP biosynthesis via de novo pathway; AMP from IMP: step 1/2. In terms of biological role, plays an important role in the de novo pathway and in the salvage pathway of purine nucleotide biosynthesis. Catalyzes the first committed step in the biosynthesis of AMP from IMP. The sequence is that of Adenylosuccinate synthetase from Saccharomyces cerevisiae (strain YJM789) (Baker's yeast).